A 1162-amino-acid polypeptide reads, in one-letter code: Enhanced level of genomic instability 1 (1162 aa).

Disordered stretches follow at residues 1-136, 144-163, 179-202, 249-319, 348-380, 611-634, and 666-697; these read MTDV…ADNQ, KAGK…KPKP, LGVN…ATPT, KTDA…TKKR, METP…RRSC, RSME…PNGE, and WSGN…SSSN. Residues 65 to 78 are compositionally biased toward basic residues; that stretch reads KQKHREKHKRKREE. Positions 79 to 111 are enriched in basic and acidic residues; the sequence is KRRAALMEDQKSTTEEVKANAKEKPQPLREKSS. Residues 125 to 136 are compositionally biased toward polar residues; it reads PLKSSTPVADNQ. Over residues 268–278 the composition is skewed to basic residues; the sequence is KRLRGRPRSRR. 2 stretches are compositionally biased toward low complexity: residues 666–676 and 684–697; these read WSGNGGSNRNS and DMSN…SSSN. 703–710 contributes to the ATP binding site; that stretch reads GPSSSGKT. 2 disordered regions span residues 900–923 and 975–1008; these read GDST…SRLA and QAAG…SDGH. The span at 984-993 shows a compositional bias: basic residues; that stretch reads AAKRKSRSPK. Positions 998–1008 are enriched in polar residues; that stretch reads SSATGQKSDGH.

This sequence belongs to the ELG1 family. Component of a heteropentameric Elg1 RFC-like complex composed of one large subunit (elg1) and four small subunits (RfC4, RfC38, CG8142 and RfC3). As part of the complex, might interact with the Enok complex, composed of enok, Br140, Eaf6 and Ing5. Within the Enok complex, interacts directly with Br140. In terms of tissue distribution, expressed at higher levels in the germline nurse cells than in the somatic follicle cells.

Its subcellular location is the nucleus. Has an important role in DNA replication and in maintaining genome integrity during replication stress. Promotes PCNA deubiquitination. As component of the Elg1 RFC-like complex, regulates the functions of the DNA polymerase processivity factor PCNA by unloading it from DNA after replication during the S phase of the cell cycle. The PCNA-unloading might be regulated via interaction with the Enok acetyltransferase complex. Might have a role in restarting of stalled/regressed replication forks during replication stress. In the ovaries, has a role in nurse cell endoreplication. The polypeptide is Enhanced level of genomic instability 1 (Drosophila melanogaster (Fruit fly)).